A 500-amino-acid chain; its full sequence is Probable malate:quinone oxidoreductase (500 aa).

The protein belongs to the MQO family. The cofactor is FAD.

The enzyme catalyses (S)-malate + a quinone = a quinol + oxaloacetate. It participates in carbohydrate metabolism; tricarboxylic acid cycle; oxaloacetate from (S)-malate (quinone route): step 1/1. In Bacillus thuringiensis (strain Al Hakam), this protein is Probable malate:quinone oxidoreductase.